Consider the following 59-residue polypeptide: Large ribosomal subunit protein uL30 (59 aa).

The protein belongs to the universal ribosomal protein uL30 family. As to quaternary structure, part of the 50S ribosomal subunit.

This is Large ribosomal subunit protein uL30 from Acetivibrio thermocellus (strain ATCC 27405 / DSM 1237 / JCM 9322 / NBRC 103400 / NCIMB 10682 / NRRL B-4536 / VPI 7372) (Clostridium thermocellum).